A 777-amino-acid polypeptide reads, in one-letter code: Semaphorin-3D (777 aa).

The N-terminal stretch at 1 to 37 (MNVTKDENPRSRSQDLHLFHAWMMLIMTVLFLPVTET) is a signal peptide. The Sema domain maps to 44–531 (RLKLTYKDLL…SWDGLVQLSL (488 aa)). Cys117 and Cys128 are joined by a disulfide. Residue Asn139 is glycosylated (N-linked (GlcNAc...) asparagine). 4 disulfide bridges follow: Cys146/Cys155, Cys286/Cys398, Cys310/Cys358, and Cys534/Cys552. In terms of domain architecture, PSI spans 533-585 (RCDTYGKACADCCLARDPYCAWDGNACSRYAPTSKRRARRQDVKYGDPITQCW). One can recognise an Ig-like C2-type domain in the interval 592-680 (SHETADEKVI…TFIHTIVKLT (89 aa)). N-linked (GlcNAc...) asparagine glycans are attached at residues Asn607 and Asn724. Cys665 and Cys731 form a disulfide bridge. Positions 740 to 765 (RRQRNKGSPKWKHMQEMKKKRNRRHH) are enriched in basic residues. The segment at 740–777 (RRQRNKGSPKWKHMQEMKKKRNRRHHRDLDELQRSVAT) is disordered. The span at 766–777 (RDLDELQRSVAT) shows a compositional bias: basic and acidic residues.

It belongs to the semaphorin family.

It is found in the secreted. Functionally, induces the collapse and paralysis of neuronal growth cones. Could potentially act as repulsive cues toward specific neuronal populations. Binds to neuropilin. The chain is Semaphorin-3D (Sema3d) from Mus musculus (Mouse).